The sequence spans 180 residues: MKSRLEIKYKDQIVPELFKELNYKSIMQVPKIQKIVINMGIGDATTDPKKLDAAIFELEKLSGQKPIVTKAKKSLAVFKLREGMAIGAKVTLRGKKMYDFLDKLINVALPRVRDFRGVSKTSFDGFGNFTTGIKEQIIFPEVDYDKVIRLRGMDITIVTSAKTNKEAFALLQKIGMPFEK.

It belongs to the universal ribosomal protein uL5 family. As to quaternary structure, part of the 50S ribosomal subunit; part of the 5S rRNA/L5/L18/L25 subcomplex. Contacts the 5S rRNA and the P site tRNA. Forms a bridge to the 30S subunit in the 70S ribosome.

In terms of biological role, this is one of the proteins that bind and probably mediate the attachment of the 5S RNA into the large ribosomal subunit, where it forms part of the central protuberance. In the 70S ribosome it contacts protein S13 of the 30S subunit (bridge B1b), connecting the 2 subunits; this bridge is implicated in subunit movement. Contacts the P site tRNA; the 5S rRNA and some of its associated proteins might help stabilize positioning of ribosome-bound tRNAs. This Mycoplasma capricolum subsp. capricolum (strain California kid / ATCC 27343 / NCTC 10154) protein is Large ribosomal subunit protein uL5.